The chain runs to 148 residues: Large ribosomal subunit protein bL9 (148 aa).

It belongs to the bacterial ribosomal protein bL9 family.

Binds to the 23S rRNA. The protein is Large ribosomal subunit protein bL9 of Staphylococcus haemolyticus (strain JCSC1435).